The chain runs to 265 residues: U6 snRNA phosphodiesterase 1 (265 aa).

Residues 1-67 are disordered; sequence MSAAPLVGYS…EGPVDDSAKH (67 aa). Basic and acidic residues predominate over residues 20–32; it reads AGARVRPGAEGRS. The active-site Proton acceptor is the His120. 120-122 provides a ligand contact to AMP; that stretch reads HLS. Residues Gln164, Tyr202, and 206-210 each bind UMP; that span reads SFHIS. Residues Tyr202 and 204–210 contribute to the AMP site; that span reads DPSFHIS. The Proton donor role is filled by His208.

It belongs to the 2H phosphoesterase superfamily. USB1 family. In terms of assembly, interacts with PLRG1, CDC5L and PRPF19.

Its subcellular location is the nucleus. The enzyme catalyses a 3'-end uridylyl-uridine-RNA = a 3'-end 2',3'-cyclophospho-uridine-RNA + uridine. It carries out the reaction a 3'-end uridylyl-adenosine-RNA = a 3'-end 2',3'-cyclophospho-uridine-RNA + adenosine. Functionally, 3'-5' RNA exonuclease that trims the 3' end of oligo(U) and oligo(A) tracts of the pre-U6 small nuclear RNA (snRNA) molecule, leading to the formation of a mature U6 snRNA 3' end-terminated with a 2',3'-cyclic phosphate. Participates in the U6 snRNA 3' end processing that prevents U6 snRNA degradation. In addition also removes uridines from the 3' end of U6atac snRNA and possibly the vault RNA VTRNA1-1. This is U6 snRNA phosphodiesterase 1 from Bos taurus (Bovine).